Consider the following 166-residue polypeptide: Ribosome maturation factor RimM (166 aa).

Positions 92–164 (EGVYYDFQLI…KIIIDPIPGL (73 aa)) constitute a PRC barrel domain.

This sequence belongs to the RimM family. In terms of assembly, binds ribosomal protein uS19.

It localises to the cytoplasm. In terms of biological role, an accessory protein needed during the final step in the assembly of 30S ribosomal subunit, possibly for assembly of the head region. Essential for efficient processing of 16S rRNA. May be needed both before and after RbfA during the maturation of 16S rRNA. It has affinity for free ribosomal 30S subunits but not for 70S ribosomes. The polypeptide is Ribosome maturation factor RimM (Dehalococcoides mccartyi (strain CBDB1)).